A 159-amino-acid polypeptide reads, in one-letter code: Large ribosomal subunit protein uL15 (159 aa).

The segment covering Met1–Arg18 has biased composition (basic and acidic residues). The segment at Met1–Gly37 is disordered. Positions Arg21–Val35 are enriched in gly residues.

It belongs to the universal ribosomal protein uL15 family. Part of the 50S ribosomal subunit.

In terms of biological role, binds to the 23S rRNA. This is Large ribosomal subunit protein uL15 from Agrobacterium fabrum (strain C58 / ATCC 33970) (Agrobacterium tumefaciens (strain C58)).